A 571-amino-acid polypeptide reads, in one-letter code: Kelch-like protein 28 (571 aa).

Residues 35 to 102 (CDIILRVGDV…AYTGTVFISQ (68 aa)) enclose the BTB domain. Kelch repeat units follow at residues 284–331 (VLCA…VLDQ), 332–386 (KVFV…VLAG), 387–433 (EVFA…VLDG), 435–479 (LYAI…VMLG), 480–526 (FIFV…VIDN), and 528–570 (LYVV…GLTA).

This is Kelch-like protein 28 (Klhl28) from Mus musculus (Mouse).